Here is a 274-residue protein sequence, read N- to C-terminus: Rhamnulose-1-phosphate aldolase (274 aa).

The active site involves E117. Residues H141, H143, and H212 each contribute to the Zn(2+) site.

It belongs to the aldolase class II family. RhaD subfamily. In terms of assembly, homotetramer. Zn(2+) serves as cofactor.

Its subcellular location is the cytoplasm. The catalysed reaction is L-rhamnulose 1-phosphate = (S)-lactaldehyde + dihydroxyacetone phosphate. It functions in the pathway carbohydrate degradation; L-rhamnose degradation; glycerone phosphate from L-rhamnose: step 3/3. Catalyzes the reversible cleavage of L-rhamnulose-1-phosphate to dihydroxyacetone phosphate (DHAP) and L-lactaldehyde. This chain is Rhamnulose-1-phosphate aldolase, found in Pectobacterium carotovorum subsp. carotovorum (strain PC1).